The chain runs to 436 residues: 3-phosphoshikimate 1-carboxyvinyltransferase (436 aa).

The 3-phosphoshikimate site is built by lysine 23, serine 24, and arginine 28. Lysine 23 serves as a coordination point for phosphoenolpyruvate. Phosphoenolpyruvate contacts are provided by glycine 97 and arginine 126. Residues serine 171, glutamine 173, aspartate 323, and lysine 350 each contribute to the 3-phosphoshikimate site. Glutamine 173 contacts phosphoenolpyruvate. The active-site Proton acceptor is the aspartate 323. The phosphoenolpyruvate site is built by arginine 354 and arginine 396.

Belongs to the EPSP synthase family. In terms of assembly, monomer.

The protein resides in the cytoplasm. The enzyme catalyses 3-phosphoshikimate + phosphoenolpyruvate = 5-O-(1-carboxyvinyl)-3-phosphoshikimate + phosphate. It functions in the pathway metabolic intermediate biosynthesis; chorismate biosynthesis; chorismate from D-erythrose 4-phosphate and phosphoenolpyruvate: step 6/7. Catalyzes the transfer of the enolpyruvyl moiety of phosphoenolpyruvate (PEP) to the 5-hydroxyl of shikimate-3-phosphate (S3P) to produce enolpyruvyl shikimate-3-phosphate and inorganic phosphate. This is 3-phosphoshikimate 1-carboxyvinyltransferase from Prochlorococcus marinus (strain AS9601).